Consider the following 572-residue polypeptide: Proline--tRNA ligase (572 aa).

This sequence belongs to the class-II aminoacyl-tRNA synthetase family. ProS type 1 subfamily. Homodimer.

It localises to the cytoplasm. The catalysed reaction is tRNA(Pro) + L-proline + ATP = L-prolyl-tRNA(Pro) + AMP + diphosphate. Its function is as follows. Catalyzes the attachment of proline to tRNA(Pro) in a two-step reaction: proline is first activated by ATP to form Pro-AMP and then transferred to the acceptor end of tRNA(Pro). As ProRS can inadvertently accommodate and process non-cognate amino acids such as alanine and cysteine, to avoid such errors it has two additional distinct editing activities against alanine. One activity is designated as 'pretransfer' editing and involves the tRNA(Pro)-independent hydrolysis of activated Ala-AMP. The other activity is designated 'posttransfer' editing and involves deacylation of mischarged Ala-tRNA(Pro). The misacylated Cys-tRNA(Pro) is not edited by ProRS. This chain is Proline--tRNA ligase, found in Photorhabdus laumondii subsp. laumondii (strain DSM 15139 / CIP 105565 / TT01) (Photorhabdus luminescens subsp. laumondii).